Here is a 441-residue protein sequence, read N- to C-terminus: Peroxisome proliferator-activated receptor delta (441 aa).

The segment covering M1–E22 has biased composition (acidic residues). A disordered region spans residues M1–L54. The span at L37 to L54 shows a compositional bias: low complexity. The nuclear receptor DNA-binding region spans N71 to F145. NR C4-type zinc fingers lie at residues C74–C94 and C111–C133. In terms of domain architecture, NR LBD spans F211–D439.

The protein belongs to the nuclear hormone receptor family. NR1 subfamily. As to quaternary structure, heterodimer with the retinoid X receptor. Interacts (via domain NR LBD) with CRY1 and CRY2 in a ligand-dependent manner. In terms of processing, 'Lys-48'-linked polyubiquitinated; leading to proteasomal degradation. Deubiquitinated and stabilized by OTUD3. In terms of tissue distribution, ubiquitous with maximal levels in placenta and skeletal muscle.

The protein resides in the nucleus. Its function is as follows. Ligand-activated transcription factor key mediator of energy metabolism in adipose tissues. Receptor that binds peroxisome proliferators such as hypolipidemic drugs and fatty acids. Has a preference for poly-unsaturated fatty acids, such as gamma-linoleic acid and eicosapentanoic acid. Once activated by a ligand, the receptor binds to promoter elements of target genes. Regulates the peroxisomal beta-oxidation pathway of fatty acids. Functions as transcription activator for the acyl-CoA oxidase gene. Decreases expression of NPC1L1 once activated by a ligand. This is Peroxisome proliferator-activated receptor delta from Homo sapiens (Human).